A 118-amino-acid polypeptide reads, in one-letter code: Large ribosomal subunit protein bL19 (118 aa).

This sequence belongs to the bacterial ribosomal protein bL19 family.

In terms of biological role, this protein is located at the 30S-50S ribosomal subunit interface and may play a role in the structure and function of the aminoacyl-tRNA binding site. The polypeptide is Large ribosomal subunit protein bL19 (Campylobacter fetus subsp. fetus (strain 82-40)).